A 107-amino-acid polypeptide reads, in one-letter code: UPF0145 protein YbjQ (107 aa).

The protein belongs to the UPF0145 family.

The protein is UPF0145 protein YbjQ of Salmonella gallinarum (strain 287/91 / NCTC 13346).